The sequence spans 290 residues: 33 kDa chaperonin (290 aa).

2 disulfides stabilise this stretch: Cys235–Cys237 and Cys268–Cys271.

It belongs to the HSP33 family. Post-translationally, under oxidizing conditions two disulfide bonds are formed involving the reactive cysteines. Under reducing conditions zinc is bound to the reactive cysteines and the protein is inactive.

Its subcellular location is the cytoplasm. Redox regulated molecular chaperone. Protects both thermally unfolding and oxidatively damaged proteins from irreversible aggregation. Plays an important role in the bacterial defense system toward oxidative stress. This is 33 kDa chaperonin from Streptococcus pyogenes serotype M3 (strain ATCC BAA-595 / MGAS315).